The sequence spans 178 residues: Protein GrpE (178 aa).

The tract at residues 1-22 (MSENQNPSPSPEEIEAAMSANA) is disordered.

Belongs to the GrpE family. As to quaternary structure, homodimer.

The protein resides in the cytoplasm. In terms of biological role, participates actively in the response to hyperosmotic and heat shock by preventing the aggregation of stress-denatured proteins, in association with DnaK and GrpE. It is the nucleotide exchange factor for DnaK and may function as a thermosensor. Unfolded proteins bind initially to DnaJ; upon interaction with the DnaJ-bound protein, DnaK hydrolyzes its bound ATP, resulting in the formation of a stable complex. GrpE releases ADP from DnaK; ATP binding to DnaK triggers the release of the substrate protein, thus completing the reaction cycle. Several rounds of ATP-dependent interactions between DnaJ, DnaK and GrpE are required for fully efficient folding. The chain is Protein GrpE from Acidovorax ebreus (strain TPSY) (Diaphorobacter sp. (strain TPSY)).